We begin with the raw amino-acid sequence, 2774 residues long: Microtubule-associated protein 1A (2774 aa).

Phosphoserine occurs at positions 114, 117, 118, 121, and 155. Position 177 is a phosphotyrosine (tyrosine 177). The tract at residues proline 310–threonine 329 is disordered. Phosphoserine is present on residues serine 319 and serine 322. Repeat unit 1 spans residues lysine 336–glutamate 338. The tract at residues lysine 336–glutamate 541 is 11 X 3 AA repeats of K-K-[DE]. Positions glutamate 342 to alanine 390 are enriched in basic and acidic residues. 9 disordered regions span residues glutamate 342–serine 718, threonine 737–threonine 808, glutamate 845–glutamate 939, phenylalanine 957–cysteine 1078, glutamate 1093–glutamate 1344, glutamine 1357–glutamine 1646, glutamate 1693–glutamine 1725, leucine 1739–serine 1843, and alanine 1861–glycine 2644. Serine 384 bears the Phosphoserine mark. Over residues glutamate 391 to lysine 406 the composition is skewed to basic residues. Composition is skewed to basic and acidic residues over residues glutamate 407–leucine 464 and valine 484–serine 500. 9 consecutive repeat copies span residues lysine 415 to aspartate 417, lysine 420 to glutamate 422, lysine 424 to glutamate 426, arginine 427 to glutamate 429, lysine 431 to glutamate 433, arginine 436 to glutamate 438, lysine 440 to aspartate 442, lysine 444 to aspartate 446, and arginine 449 to aspartate 451. Phosphothreonine is present on threonine 504. Low complexity predominate over residues proline 506 to alanine 516. Phosphoserine occurs at positions 526 and 527. 2 stretches are compositionally biased toward basic and acidic residues: residues glutamate 536 to leucine 554 and glutamate 584 to valine 595. Repeat unit 11 spans residues lysine 539 to glutamate 541. A phosphoserine mark is found at serine 604 and serine 611. Basic and acidic residues-rich tracts occupy residues glutamate 614 to glutamate 631 and alanine 638 to alanine 675. At serine 643 the chain carries Phosphoserine. Threonine 663 carries the phosphothreonine modification. Residues serine 666, serine 677, serine 690, and serine 785 each carry the phosphoserine modification. Composition is skewed to polar residues over residues glutamate 845 to glutamate 858 and threonine 869 to threonine 881. Serine 872, serine 875, serine 876, and serine 889 each carry phosphoserine. At threonine 892 the chain carries Phosphothreonine. 22 positions are modified to phosphoserine: serine 894, serine 898, serine 907, serine 980, serine 990, serine 998, serine 1007, serine 1013, serine 1022, serine 1029, serine 1037, serine 1061, serine 1132, serine 1134, serine 1148, serine 1160, serine 1178, serine 1188, serine 1191, serine 1197, serine 1206, and serine 1209. Basic and acidic residues predominate over residues proline 1008–histidine 1028. Residues serine 1142 to threonine 1157 show a composition bias toward polar residues. A compositionally biased stretch (polar residues) spans glutamate 1180–glutamate 1190. The span at leucine 1198–threonine 1212 shows a compositional bias: polar residues. Residues leucine 1220–cysteine 1236 are compositionally biased toward basic and acidic residues. A phosphoserine mark is found at serine 1252, serine 1280, serine 1301, serine 1304, and serine 1307. Positions threonine 1293–proline 1308 are enriched in low complexity. Composition is skewed to basic and acidic residues over residues tryptophan 1317–glutamine 1336, glutamine 1357–glycine 1409, alanine 1416–aspartate 1428, glutamate 1436–isoleucine 1479, and arginine 1487–serine 1574. Phosphoserine is present on residues serine 1504, serine 1568, serine 1574, and serine 1594. Basic and acidic residues predominate over residues serine 1599–aspartate 1613. Serine 1622, serine 1643, serine 1715, serine 1742, serine 1757, serine 1763, and serine 1767 each carry phosphoserine. The segment covering threonine 1707 to threonine 1718 has biased composition (polar residues). Threonine 1772 is modified (phosphothreonine). 2 positions are modified to phosphoserine: serine 1778 and serine 1784. Polar residues predominate over residues threonine 1789–serine 1803. A compositionally biased stretch (pro residues) spans leucine 1818 to proline 1839. A compositionally biased stretch (basic and acidic residues) spans lysine 1873 to glutamate 1885. Serine 1897 bears the Phosphoserine mark. The segment covering alanine 1908 to serine 1930 has biased composition (basic and acidic residues). Residue threonine 1923 is modified to Phosphothreonine. Positions serine 1984–proline 1997 are enriched in polar residues. Serine 1988 bears the Phosphoserine mark. The span at alanine 2008–alanine 2034 shows a compositional bias: pro residues. Position 2026 is a phosphothreonine (threonine 2026). Phosphoserine is present on residues serine 2043 and serine 2077. A compositionally biased stretch (basic and acidic residues) spans proline 2055 to arginine 2092. The segment covering serine 2115–serine 2125 has biased composition (low complexity). Residues proline 2144–alanine 2153 are compositionally biased toward pro residues. 6 positions are modified to phosphoserine: serine 2204, serine 2221, serine 2225, serine 2228, serine 2229, and serine 2260. The segment covering glutamate 2226–isoleucine 2237 has biased composition (polar residues). The segment covering aspartate 2271–proline 2287 has biased composition (low complexity). Pro residues predominate over residues alanine 2288 to glycine 2298. Positions leucine 2299–proline 2309 are enriched in low complexity. Over residues alanine 2352–glutamate 2364 the composition is skewed to basic and acidic residues. Serine 2424 carries the phosphoserine modification. The segment covering serine 2477–aspartate 2489 has biased composition (low complexity). A compositionally biased stretch (pro residues) spans aspartate 2534–proline 2550. Over residues glycine 2565–arginine 2575 the composition is skewed to basic and acidic residues. The segment covering arginine 2613 to serine 2623 has biased composition (low complexity). 2 positions are modified to phosphoserine: serine 2620 and serine 2635.

The protein belongs to the MAP1 family. As to quaternary structure, 3 different light chains, LC1 (a cleavage product of MAP1B), LC2 (a cleavage product of MAP1A) and LC3 (produced by one of the MAP1LC3 genes), can associate with the MAP1A or MAP1B heavy chains. Interacts with guanylate kinase-like domain of DLG1, DLG2 and DLG4. Binds to CSNK1D. Interacts with TIAM2. Interacts with ELAVL4. In terms of processing, phosphorylated by CSNK1D. LC2 is generated from MAP1A by proteolytic processing. It is free to associate with both MAP1A and MAP1B. In terms of tissue distribution, brain, heart and muscle.

The protein localises to the cytoplasm. Its subcellular location is the cytoskeleton. In terms of biological role, structural protein involved in the filamentous cross-bridging between microtubules and other skeletal elements. The sequence is that of Microtubule-associated protein 1A (Map1a) from Rattus norvegicus (Rat).